A 251-amino-acid polypeptide reads, in one-letter code: tRNA-cytidine(32) 2-sulfurtransferase 2 (251 aa).

A PP-loop motif motif is present at residues Ser33–Ser38. Cys108, Cys111, and Cys199 together coordinate [4Fe-4S] cluster.

The protein belongs to the TtcA family. Homodimer. Requires Mg(2+) as cofactor. It depends on [4Fe-4S] cluster as a cofactor.

It is found in the cytoplasm. It catalyses the reaction cytidine(32) in tRNA + S-sulfanyl-L-cysteinyl-[cysteine desulfurase] + AH2 + ATP = 2-thiocytidine(32) in tRNA + L-cysteinyl-[cysteine desulfurase] + A + AMP + diphosphate + H(+). It functions in the pathway tRNA modification. In terms of biological role, catalyzes the ATP-dependent 2-thiolation of cytidine in position 32 of tRNA, to form 2-thiocytidine (s(2)C32). The sulfur atoms are provided by the cysteine/cysteine desulfurase (IscS) system. The chain is tRNA-cytidine(32) 2-sulfurtransferase 2 from Francisella tularensis subsp. tularensis (strain FSC 198).